The chain runs to 751 residues: Lysine decarboxylase LdcA (751 aa).

It belongs to the Orn/Lys/Arg decarboxylase class-I family. Homodecamer.

The enzyme catalyses L-lysine + H(+) = cadaverine + CO2. Its function is as follows. Plays an essential role in lysine utilization by acting as a lysine decarboxylase. This is Lysine decarboxylase LdcA from Pseudomonas aeruginosa (strain ATCC 15692 / DSM 22644 / CIP 104116 / JCM 14847 / LMG 12228 / 1C / PRS 101 / PAO1).